The sequence spans 319 residues: Ribosomal large subunit pseudouridine synthase C (319 aa).

One can recognise an S4 RNA-binding domain in the interval 20–83; it reads QRIDNFLRTQ…AEREEEAVSP (64 aa). Asp-144 is an active-site residue.

This sequence belongs to the pseudouridine synthase RluA family.

It carries out the reaction uridine(955/2504/2580) in 23S rRNA = pseudouridine(955/2504/2580) in 23S rRNA. Responsible for synthesis of pseudouridine from uracil at positions 955, 2504 and 2580 in 23S ribosomal RNA. The sequence is that of Ribosomal large subunit pseudouridine synthase C from Escherichia coli (strain K12).